The sequence spans 489 residues: Glutamyl-tRNA(Gln) amidotransferase subunit A (489 aa).

Catalysis depends on charge relay system residues Lys-78 and Ser-153. Residue Ser-177 is the Acyl-ester intermediate of the active site.

The protein belongs to the amidase family. GatA subfamily. Heterotrimer of A, B and C subunits.

It catalyses the reaction L-glutamyl-tRNA(Gln) + L-glutamine + ATP + H2O = L-glutaminyl-tRNA(Gln) + L-glutamate + ADP + phosphate + H(+). Functionally, allows the formation of correctly charged Gln-tRNA(Gln) through the transamidation of misacylated Glu-tRNA(Gln) in organisms which lack glutaminyl-tRNA synthetase. The reaction takes place in the presence of glutamine and ATP through an activated gamma-phospho-Glu-tRNA(Gln). The chain is Glutamyl-tRNA(Gln) amidotransferase subunit A from Nitratidesulfovibrio vulgaris (strain DP4) (Desulfovibrio vulgaris).